We begin with the raw amino-acid sequence, 410 residues long: Putative competence-damage inducible protein (410 aa).

Belongs to the CinA family.

The polypeptide is Putative competence-damage inducible protein (Finegoldia magna (strain ATCC 29328 / DSM 20472 / WAL 2508) (Peptostreptococcus magnus)).